Consider the following 870-residue polypeptide: Rho GTPase-activating protein 7 (870 aa).

Residues 18–125 (TVFKSGPLFI…WKTALEQALA (108 aa)) enclose the PH domain. The region spanning 167–367 (LALEDIDGSP…VLLEDYGSIF (201 aa)) is the Rho-GAP domain. 2 disordered regions span residues 378–432 (STES…SGCT) and 446–465 (DSDI…SNIR). Positions 407–417 (NEVEPVTDDDN) are enriched in acidic residues. Residues 569-693 (GEDELAIQRL…HQLNQQRQTH (125 aa)) are a coiled coil. The disordered stretch occupies residues 736 to 793 (HEENVLGAEWRNSKGAGSFGVGNSRQPSRKQIPESTNTTDSKISEESGKISVDKLSSI). Residues 777 to 787 (KISEESGKISV) show a composition bias toward basic and acidic residues.

Its function is as follows. Acts as a GTPase activator for the Rac-type GTPase by converting it to an inactive GDP-bound state. The sequence is that of Rho GTPase-activating protein 7 (ROPGAP7) from Arabidopsis thaliana (Mouse-ear cress).